Consider the following 174-residue polypeptide: Crossover junction endodeoxyribonuclease RuvC (174 aa).

Catalysis depends on residues Asp-8, Glu-69, and Asp-141. Positions 8, 69, and 141 each coordinate Mg(2+).

The protein belongs to the RuvC family. As to quaternary structure, homodimer which binds Holliday junction (HJ) DNA. The HJ becomes 2-fold symmetrical on binding to RuvC with unstacked arms; it has a different conformation from HJ DNA in complex with RuvA. In the full resolvosome a probable DNA-RuvA(4)-RuvB(12)-RuvC(2) complex forms which resolves the HJ. The cofactor is Mg(2+).

Its subcellular location is the cytoplasm. It catalyses the reaction Endonucleolytic cleavage at a junction such as a reciprocal single-stranded crossover between two homologous DNA duplexes (Holliday junction).. Functionally, the RuvA-RuvB-RuvC complex processes Holliday junction (HJ) DNA during genetic recombination and DNA repair. Endonuclease that resolves HJ intermediates. Cleaves cruciform DNA by making single-stranded nicks across the HJ at symmetrical positions within the homologous arms, yielding a 5'-phosphate and a 3'-hydroxyl group; requires a central core of homology in the junction. The consensus cleavage sequence is 5'-(A/T)TT(C/G)-3'. Cleavage occurs on the 3'-side of the TT dinucleotide at the point of strand exchange. HJ branch migration catalyzed by RuvA-RuvB allows RuvC to scan DNA until it finds its consensus sequence, where it cleaves and resolves the cruciform DNA. This is Crossover junction endodeoxyribonuclease RuvC from Xanthomonas campestris pv. campestris (strain 8004).